The following is a 104-amino-acid chain: MAAKIRKGDKVIVLSGRDKGRTGEVFEVRPAESRALVRGVNMVKRHQKQSQSQEGGIISKESPVHLSKIAIVGKDGKPTRVGFKIQADGTKVRVAKRSGAEIDG.

The protein belongs to the universal ribosomal protein uL24 family. In terms of assembly, part of the 50S ribosomal subunit.

One of two assembly initiator proteins, it binds directly to the 5'-end of the 23S rRNA, where it nucleates assembly of the 50S subunit. In terms of biological role, one of the proteins that surrounds the polypeptide exit tunnel on the outside of the subunit. The polypeptide is Large ribosomal subunit protein uL24 (Nitrobacter hamburgensis (strain DSM 10229 / NCIMB 13809 / X14)).